Reading from the N-terminus, the 175-residue chain is T-cell surface glycoprotein CD3 epsilon chain (175 aa).

The N-terminal stretch at Met1 to Ala21 is a signal peptide. At Gln22–Thr100 the chain is on the extracellular side. Residues Phe101 to Val121 form a helical membrane-spanning segment. Over Tyr122 to Phe175 the chain is Cytoplasmic. Positions Arg133–Gln163 are disordered. The ITAM domain maps to Arg146–Arg173.

In terms of assembly, the TCR/CD3 complex of T-lymphocytes consists of either a TCR alpha/beta or TCR gamma/delta heterodimer coexpressed at the cell surface with the invariant subunits of CD3 labeled gamma, delta, epsilon, zeta, and eta.

The protein localises to the cell membrane. The CD3 complex mediates signal transduction, resulting in T-cell activation and proliferation. Required for normal immune responses. This is T-cell surface glycoprotein CD3 epsilon chain (CD3E) from Gallus gallus (Chicken).